A 503-amino-acid chain; its full sequence is Probable cytosol aminopeptidase (503 aa).

Lys-271 and Asp-276 together coordinate Mn(2+). Lys-283 is an active-site residue. Mn(2+)-binding residues include Asp-294, Asp-353, and Glu-355. Residue Arg-357 is part of the active site.

This sequence belongs to the peptidase M17 family. Mn(2+) serves as cofactor.

The protein localises to the cytoplasm. The enzyme catalyses Release of an N-terminal amino acid, Xaa-|-Yaa-, in which Xaa is preferably Leu, but may be other amino acids including Pro although not Arg or Lys, and Yaa may be Pro. Amino acid amides and methyl esters are also readily hydrolyzed, but rates on arylamides are exceedingly low.. It carries out the reaction Release of an N-terminal amino acid, preferentially leucine, but not glutamic or aspartic acids.. Functionally, presumably involved in the processing and regular turnover of intracellular proteins. Catalyzes the removal of unsubstituted N-terminal amino acids from various peptides. The polypeptide is Probable cytosol aminopeptidase (Chlorobaculum parvum (strain DSM 263 / NCIMB 8327) (Chlorobium vibrioforme subsp. thiosulfatophilum)).